Reading from the N-terminus, the 298-residue chain is Protein DR_1172 (298 aa).

LEA-like repeat units follow at residues 48–117, 128–197, and 201–270; these read DAAQ…NVGQ, DQAK…DVAQ, and QGAQ…AGKQ. A compositionally biased stretch (basic and acidic residues) spans 174–193; the sequence is VQDVKADASKAADQAKDKAQ. The disordered stretch occupies residues 174–298; the sequence is VQDVKADASK…MTGNTNTRKN (125 aa). A compositionally biased stretch (low complexity) spans 194–208; it reads DVAQNVKQGAQQAAS. Positions 209 to 233 are enriched in basic and acidic residues; that stretch reads DAKDKVQDVKADASRAADQAKDKAQ. A compositionally biased stretch (low complexity) spans 275–298; the sequence is GSTTNNAGTAGNTGMTGNTNTRKN.

Belongs to the LEA type 1 family.

The protein is Protein DR_1172 of Deinococcus radiodurans (strain ATCC 13939 / DSM 20539 / JCM 16871 / CCUG 27074 / LMG 4051 / NBRC 15346 / NCIMB 9279 / VKM B-1422 / R1).